An 89-amino-acid polypeptide reads, in one-letter code: Small ribosomal subunit protein uS15 (89 aa).

It belongs to the universal ribosomal protein uS15 family. As to quaternary structure, part of the 30S ribosomal subunit. Forms a bridge to the 50S subunit in the 70S ribosome, contacting the 23S rRNA.

Its function is as follows. One of the primary rRNA binding proteins, it binds directly to 16S rRNA where it helps nucleate assembly of the platform of the 30S subunit by binding and bridging several RNA helices of the 16S rRNA. Functionally, forms an intersubunit bridge (bridge B4) with the 23S rRNA of the 50S subunit in the ribosome. The polypeptide is Small ribosomal subunit protein uS15 (Orientia tsutsugamushi (strain Boryong) (Rickettsia tsutsugamushi)).